Consider the following 442-residue polypeptide: MANSFAARIFTTLSDLQTNMANLKVIGIVIGKTDVKGFPDRKNIGSERYTFSFTIRDSPAHFVNAASWGNEDYIKSLSDSFRVGDCVIIENPLIQRKEIEREEKFSPATPSNCKLLLSENHSTVKVCSSYEVDTKLLSLIHLPVKESHDYYSLGDIVANGHSLNGRIINVLAAVKSVGEPKYFTTSDRRKGQRCEVRLYDETESSFAMTCWDNESILLAQSWMPRETVIFASDVRINFDKFRNCMTATVISKTIITTNPDIPEANILLNFIRENKETNVLDDEIDSYFKESINLSTIVDVYTVEQLKGKALKNEGKADPSYGILYAYISTLNIDDETTKVVRNRCSSCGYIVNEASNMCTTCNKNSLDFKSVFLSFHVLIDLTDHTGTLHSCSLTGSVAEETLGCTFVLSHRARSGLKISVLSCKLADPTEASRNLSGQKHV.

The segment at residues 167–272 (IINVLAAVKS…EANILLNFIR (106 aa)) is a DNA-binding region (OB).

It belongs to the MEIOB family. As to quaternary structure, component of a multiprotein complex with RPA2 and SPATA22. Interacts with SPATA22. Interacts with the complex BRME1:HSF2BP:BRCA2. As to expression, in fetal gonads, specifically expressed in the ovary starting at the 14th weeks post fertilization. In the adult, restricted to testis.

It localises to the cytoplasm. It is found in the nucleus. The protein localises to the chromosome. In terms of biological role, single-stranded DNA-binding protein required for homologous recombination in meiosis I. Required for double strand breaks (DSBs) repair and crossover formation and promotion of faithful and complete synapsis. Not required for the initial loading of recombinases but required to maintain a proper number of RAD51 and DMC1 foci after the zygotene stage. May act by ensuring the stabilization of recombinases, which is required for successful homology search and meiotic recombination. Displays Single-stranded DNA 3'-5' exonuclease activity in vitro. This Homo sapiens (Human) protein is Meiosis-specific with OB domain-containing protein.